A 666-amino-acid polypeptide reads, in one-letter code: MLRRAVELVWLIPILPFIGAFLVGFGLISFNKKVNQLRKPAALLLISSVGISAVLSFMVLADQIGGAPCSEVLFSWASAGTFNLEMGYRVDPIGATMLALVSTVAILVMVYSDGYMSHDKSYVRFFTYLGLFTSSMLALILSPNLLEIYVFWELVGMCSYLLIGFWYEREDAANAAQKAFVVNRVGDFGFLLGILGLFWATNSFDFQIVATKMAASISDGSIPHWAAIALCLLLFMGPMAKSAQFPLHVWLPDAMEGPTPISALIHAATMVAAGVFLVARLEPLYSQVPDVQIIVAVIGTITCFLGASIALIQMDLKKGLAYSTISQLGYMMLAMGCGAPVAGMFHLITHAFFKAMLFLGSGSVIHAMEEVVGHDPTLAQDMRLMGGLRKTMPITGITFFIGCVAISGIPPLAGFWSKDEILSKAFDSYPLLWGVGLFTAGLTAFYMFRLYFLTFEGEFRGNNIALREKLLIAAGKSFDPIETKEIQSTHESGWQMTLPLVILSVPSVLIGFLGSPWNNRFGMLLYPEEALEAAKTFSWGEFLPLAIASVMISTCGIVIATIAYAYHWIDLGQSVASRLKIINNFLVNKWYLDKINEYIFVNGSRGLAKKILNLDETVLDKAVVETGLTTLDAGKWLSYFETGRPQFYALIIFGGVISLIVIFNRL.

Helical transmembrane passes span 8-28 (LVWLIPILPFIGAFLVGFGLI), 41-61 (AALLLISSVGISAVLSFMVLA), 90-110 (VDPIGATMLALVSTVAILVMV), 121-141 (SYVRFFTYLGLFTSSMLALIL), 145-165 (LLEIYVFWELVGMCSYLLIGF), 190-210 (FLLGILGLFWATNSFDFQIVA), 220-240 (GSIPHWAAIALCLLLFMGPMA), 259-279 (TPISALIHAATMVAAGVFLVA), 293-313 (IIVAVIGTITCFLGASIALIQ), 328-348 (LGYMMLAMGCGAPVAGMFHLI), 396-416 (GITFFIGCVAISGIPPLAGFW), 428-448 (SYPLLWGVGLFTAGLTAFYMF), 497-517 (TLPLVILSVPSVLIGFLGSPW), 542-562 (FLPLAIASVMISTCGIVIATI), and 643-663 (GRPQFYALIIFGGVISLIVIF).

This sequence belongs to the complex I subunit 5 family. In terms of assembly, NDH is composed of at least 16 different subunits, 5 of which are encoded in the nucleus.

It localises to the plastid. Its subcellular location is the organellar chromatophore thylakoid membrane. The enzyme catalyses a plastoquinone + NADH + (n+1) H(+)(in) = a plastoquinol + NAD(+) + n H(+)(out). The catalysed reaction is a plastoquinone + NADPH + (n+1) H(+)(in) = a plastoquinol + NADP(+) + n H(+)(out). Its function is as follows. NDH shuttles electrons from NAD(P)H:plastoquinone, via FMN and iron-sulfur (Fe-S) centers, to quinones in the photosynthetic chain and possibly in a chloroplast respiratory chain. The immediate electron acceptor for the enzyme in this species is believed to be plastoquinone. Couples the redox reaction to proton translocation, and thus conserves the redox energy in a proton gradient. This Paulinella chromatophora protein is NAD(P)H-quinone oxidoreductase subunit 5, organellar chromatophore 1 (ndhF1).